We begin with the raw amino-acid sequence, 161 residues long: Ribosome maturation factor RimP (161 aa).

This sequence belongs to the RimP family.

The protein localises to the cytoplasm. Its function is as follows. Required for maturation of 30S ribosomal subunits. This is Ribosome maturation factor RimP from Rickettsia felis (strain ATCC VR-1525 / URRWXCal2) (Rickettsia azadi).